A 267-amino-acid polypeptide reads, in one-letter code: Serine/arginine-rich splicing factor 1 (267 aa).

In terms of domain architecture, RRM 1 spans 16-91 (CRIYVGNLPP…YRLRVEFPRS (76 aa)). Disordered regions lie at residues 90-137 (RSGR…PSRR) and 212-267 (KVDG…RSRT). Over residues 93–127 (RGAGGRGGGGGGGGGGGGGGGGGGGGGGGGGGGAP) the composition is skewed to gly residues. Residues 140–214 (YRVVVSGLPP…ETAYIRVKVD (75 aa)) form the RRM 2 domain. A compositionally biased stretch (basic residues) spans 224–267 (SRSRSRSRSRSRSRSNSRSRSYSPRRSRGSPRYSPRHSRSRSRT).

Belongs to the splicing factor SR family.

The protein localises to the cytoplasm. It localises to the nucleus speckle. Its function is as follows. May play a role in preventing exon skipping, ensuring the accuracy of splicing and regulating alternative splicing. This chain is Serine/arginine-rich splicing factor 1 (srsf1), found in Xenopus tropicalis (Western clawed frog).